A 555-amino-acid chain; its full sequence is Coiled-coil domain-containing protein 102A (555 aa).

Disordered stretches follow at residues 1–68, 136–202, and 214–254; these read MSHG…ADGD, LAGA…GSQE, and PEEP…EEDA. A phosphoserine mark is found at serine 12, serine 26, and serine 28. The segment covering 37–61 has biased composition (pro residues); sequence SLPPTPPSGTPSPGPPPALPLPPTP. The stretch at 72–161 forms a coiled coil; sequence REELRLRELE…ARGRELARLR (90 aa). 2 stretches are compositionally biased toward basic and acidic residues: residues 136-159 and 166-183; these read LAGA…ELAR and GVDR…REQE. A compositionally biased stretch (low complexity) spans 224–236; it reads RSAGAGAPRGSSG. Coiled-coil stretches lie at residues 268 to 401 and 432 to 522; these read QKVL…RRQT and KLKK…QNAP. Residues 478–555 form a disordered region; it reads ELDEAHNQAR…EDEDLQIQVA (78 aa). The segment covering 536-555 has biased composition (acidic residues); it reads EAGDGASDLDEDEDLQIQVA. Position 542 is a phosphoserine (serine 542).

This Bos taurus (Bovine) protein is Coiled-coil domain-containing protein 102A (CCDC102A).